A 469-amino-acid polypeptide reads, in one-letter code: Phosphatidylinositol 4-kinase type 2-beta (469 aa).

The segment at 1–84 is disordered; sequence MAEACEPTRP…LDRTRTTSSE (84 aa). Serine 37 is modified (phosphoserine). The PI3K/PI4K catalytic domain occupies 108-439; it reads GVFPERISQG…AQMPCVIVEC (332 aa). Residues 114–120 are G-loop; it reads ISQGSSG. ATP contacts are provided by serine 121 and lysine 136. Positions 141-143 are important for substrate binding; sequence EPY. The segment at 149–162 is important for interaction with membranes; sequence KWTKYVHKVCCPCC. ATP contacts are provided by residues 245 to 248 and 259 to 260; these read QLFV and RR. The tract at residues 252–260 is important for interaction with membranes; the sequence is KEAEYWLRR. The interval 289–297 is catalytic loop; sequence RNTDRGNDN. The tract at residues 330–350 is activation loop; sequence AIDNGLAFPFKHPDEWRAYPF. Aspartate 332 is an ATP binding site. Positions 345–354 are important for interaction with membranes; the sequence is WRAYPFHWAW.

The protein belongs to the PI3/PI4-kinase family. Type II PI4K subfamily.

It localises to the cytoplasm. Its subcellular location is the cytosol. The protein localises to the golgi apparatus membrane. It is found in the endoplasmic reticulum membrane. The protein resides in the cell membrane. It localises to the early endosome membrane. It carries out the reaction a 1,2-diacyl-sn-glycero-3-phospho-(1D-myo-inositol) + ATP = a 1,2-diacyl-sn-glycero-3-phospho-(1D-myo-inositol 4-phosphate) + ADP + H(+). In terms of biological role, together with PI4K2A and the type III PI4Ks (PIK4CA and PIK4CB) it contributes to the overall PI4-kinase activity of the cell. This contribution may be especially significant in plasma membrane, endosomal and Golgi compartments. The phosphorylation of phosphatidylinositol (PI) to PI4P is the first committed step in the generation of phosphatidylinositol 4,5-bisphosphate (PIP2), a precursor of the second messenger inositol 1,4,5-trisphosphate (InsP3). Contributes to the production of InsP3 in stimulated cells and is likely to be involved in the regulation of vesicular trafficking. In Mus musculus (Mouse), this protein is Phosphatidylinositol 4-kinase type 2-beta (Pi4k2b).